Reading from the N-terminus, the 90-residue chain is Small ribosomal subunit protein uS15c (90 aa).

This sequence belongs to the universal ribosomal protein uS15 family. Part of the 30S ribosomal subunit.

The protein resides in the plastid. Its subcellular location is the chloroplast. The polypeptide is Small ribosomal subunit protein uS15c (rps15) (Gossypium barbadense (Sea Island cotton)).